Reading from the N-terminus, the 370-residue chain is Protein FAM110B (370 aa).

Disordered regions lie at residues 127–151 (SSEG…RSEA) and 237–256 (KSPE…RPSL). Residues Ser238 and Ser301 each carry the phosphoserine modification. The segment at 317 to 337 (DCEQSQDSNSDLRNDDSANDR) is disordered. Positions 326–335 (SDLRNDDSAN) are enriched in basic and acidic residues.

Belongs to the FAM110 family. As to expression, detected in thyroid, spleen and testis, and at lower levels in stomach, spinal cord, lymph node, trachea, adrenal gland, prostate, ovary and intestine.

Its subcellular location is the cytoplasm. The protein resides in the cytoskeleton. The protein localises to the microtubule organizing center. It localises to the centrosome. May be involved in tumor progression. The polypeptide is Protein FAM110B (FAM110B) (Homo sapiens (Human)).